The chain runs to 95 residues: Aspartyl/glutamyl-tRNA(Asn/Gln) amidotransferase subunit C (95 aa).

It belongs to the GatC family. As to quaternary structure, heterotrimer of A, B and C subunits.

The enzyme catalyses L-glutamyl-tRNA(Gln) + L-glutamine + ATP + H2O = L-glutaminyl-tRNA(Gln) + L-glutamate + ADP + phosphate + H(+). It catalyses the reaction L-aspartyl-tRNA(Asn) + L-glutamine + ATP + H2O = L-asparaginyl-tRNA(Asn) + L-glutamate + ADP + phosphate + 2 H(+). Its function is as follows. Allows the formation of correctly charged Asn-tRNA(Asn) or Gln-tRNA(Gln) through the transamidation of misacylated Asp-tRNA(Asn) or Glu-tRNA(Gln) in organisms which lack either or both of asparaginyl-tRNA or glutaminyl-tRNA synthetases. The reaction takes place in the presence of glutamine and ATP through an activated phospho-Asp-tRNA(Asn) or phospho-Glu-tRNA(Gln). The chain is Aspartyl/glutamyl-tRNA(Asn/Gln) amidotransferase subunit C from Clostridium botulinum (strain Loch Maree / Type A3).